We begin with the raw amino-acid sequence, 173 residues long: U4/U6.U5 small nuclear ribonucleoprotein component snu23 (173 aa).

The Matrin-type zinc finger occupies 55-85 (WYCEACNETYKDSLSWLDHLNSTQHLRKTRT). Positions 119 to 149 (SLKERVERYHQELEAKKLRRKQKKVNKEKNS) form a coiled coil.

As to quaternary structure, component of the 25S U4/U6.U5 tri-snRNP particle, a subcomplex of the spliceosome.

The protein localises to the cytoplasm. It is found in the cytoskeleton. Its subcellular location is the microtubule organizing center. The protein resides in the spindle pole body. It localises to the nucleus. The polypeptide is U4/U6.U5 small nuclear ribonucleoprotein component snu23 (snu23) (Schizosaccharomyces pombe (strain 972 / ATCC 24843) (Fission yeast)).